Here is a 239-residue protein sequence, read N- to C-terminus: Ribosomal RNA small subunit methyltransferase G (239 aa).

S-adenosyl-L-methionine-binding positions include G78, F83, A129–E130, and R148.

It belongs to the methyltransferase superfamily. RNA methyltransferase RsmG family.

Its subcellular location is the cytoplasm. Functionally, specifically methylates the N7 position of a guanine in 16S rRNA. This chain is Ribosomal RNA small subunit methyltransferase G, found in Clostridium botulinum (strain Alaska E43 / Type E3).